Consider the following 228-residue polypeptide: Urease accessory protein UreF (228 aa).

The protein belongs to the UreF family. In terms of assembly, ureD, UreF and UreG form a complex that acts as a GTP-hydrolysis-dependent molecular chaperone, activating the urease apoprotein by helping to assemble the nickel containing metallocenter of UreC. The UreE protein probably delivers the nickel.

Its subcellular location is the cytoplasm. In terms of biological role, required for maturation of urease via the functional incorporation of the urease nickel metallocenter. This Yersinia enterocolitica serotype O:8 / biotype 1B (strain NCTC 13174 / 8081) protein is Urease accessory protein UreF.